A 95-amino-acid chain; its full sequence is Large ribosomal subunit protein uL23 (95 aa).

This sequence belongs to the universal ribosomal protein uL23 family. Part of the 50S ribosomal subunit. Contacts protein L29, and trigger factor when it is bound to the ribosome.

In terms of biological role, one of the early assembly proteins it binds 23S rRNA. One of the proteins that surrounds the polypeptide exit tunnel on the outside of the ribosome. Forms the main docking site for trigger factor binding to the ribosome. The protein is Large ribosomal subunit protein uL23 of Solibacter usitatus (strain Ellin6076).